The following is a 493-amino-acid chain: Alpha-amylase-related protein (493 aa).

Positions 1–19 (MFKFALALTLCLAGSLSLA) are cleaved as a signal peptide. Gln20 carries the pyrrolidone carboxylic acid modification. Cysteines 47 and 103 form a disulfide. Ca(2+)-binding residues include Asn117, Gln168, and Asp177. Cysteines 156 and 170 form a disulfide. Arg205 serves as a coordination point for chloride. Asp207 (nucleophile) is an active-site residue. His211 lines the Ca(2+) pocket. Residue Glu244 is the Proton donor of the active site. Positions 307 and 342 each coordinate chloride. 3 cysteine pairs are disulfide-bonded: Cys375/Cys381, Cys417/Cys440, and Cys447/Cys459.

The protein belongs to the glycosyl hydrolase 13 family. In terms of assembly, monomer. Ca(2+) is required as a cofactor. Chloride serves as cofactor.

It is found in the secreted. The catalysed reaction is Endohydrolysis of (1-&gt;4)-alpha-D-glucosidic linkages in polysaccharides containing three or more (1-&gt;4)-alpha-linked D-glucose units.. The protein is Alpha-amylase-related protein (Amyrel) of Drosophila elegans (Fruit fly).